The following is a 207-amino-acid chain: Outer-membrane lipoprotein LolB (207 aa).

The N-terminal stretch at Met-1–Ala-21 is a signal peptide. The N-palmitoyl cysteine moiety is linked to residue Cys-22. Cys-22 is lipidated: S-diacylglycerol cysteine.

The protein belongs to the LolB family. In terms of assembly, monomer.

The protein resides in the cell outer membrane. Its function is as follows. Plays a critical role in the incorporation of lipoproteins in the outer membrane after they are released by the LolA protein. This Serratia proteamaculans (strain 568) protein is Outer-membrane lipoprotein LolB.